A 522-amino-acid polypeptide reads, in one-letter code: 2-isopropylmalate synthase (522 aa).

The 263-residue stretch at 5–267 (VIIFDTTLRD…ETGINAKEIH (263 aa)) folds into the Pyruvate carboxyltransferase domain. 4 residues coordinate Mn(2+): D14, H202, H204, and N238. The interval 392 to 522 (QLQQLVVQSD…MQKNRELGGV (131 aa)) is regulatory domain.

This sequence belongs to the alpha-IPM synthase/homocitrate synthase family. LeuA type 1 subfamily. As to quaternary structure, homodimer. It depends on Mn(2+) as a cofactor.

It localises to the cytoplasm. The catalysed reaction is 3-methyl-2-oxobutanoate + acetyl-CoA + H2O = (2S)-2-isopropylmalate + CoA + H(+). The protein operates within amino-acid biosynthesis; L-leucine biosynthesis; L-leucine from 3-methyl-2-oxobutanoate: step 1/4. Its function is as follows. Catalyzes the condensation of the acetyl group of acetyl-CoA with 3-methyl-2-oxobutanoate (2-ketoisovalerate) to form 3-carboxy-3-hydroxy-4-methylpentanoate (2-isopropylmalate). This Shewanella baltica (strain OS185) protein is 2-isopropylmalate synthase.